A 930-amino-acid chain; its full sequence is Isoleucine--tRNA ligase (930 aa).

A disordered region spans residues methionine 1–proline 21. Residues proline 57–histidine 67 carry the 'HIGH' region motif. Position 555 (glutamate 555) interacts with L-isoleucyl-5'-AMP. The 'KMSKS' region motif lies at lysine 596 to serine 600. Lysine 599 serves as a coordination point for ATP. Cysteine 889, cysteine 892, cysteine 909, and cysteine 912 together coordinate Zn(2+).

It belongs to the class-I aminoacyl-tRNA synthetase family. IleS type 1 subfamily. Monomer. Zn(2+) serves as cofactor.

The protein localises to the cytoplasm. It catalyses the reaction tRNA(Ile) + L-isoleucine + ATP = L-isoleucyl-tRNA(Ile) + AMP + diphosphate. Functionally, catalyzes the attachment of isoleucine to tRNA(Ile). As IleRS can inadvertently accommodate and process structurally similar amino acids such as valine, to avoid such errors it has two additional distinct tRNA(Ile)-dependent editing activities. One activity is designated as 'pretransfer' editing and involves the hydrolysis of activated Val-AMP. The other activity is designated 'posttransfer' editing and involves deacylation of mischarged Val-tRNA(Ile). The chain is Isoleucine--tRNA ligase from Limosilactobacillus fermentum (strain NBRC 3956 / LMG 18251) (Lactobacillus fermentum).